A 364-amino-acid polypeptide reads, in one-letter code: RNA polymerase sigma factor SigA (364 aa).

The interval 132–202 (LAEANLRLVV…TRAIADQART (71 aa)) is sigma-70 factor domain-2. Residues 156–159 (DLIQ) carry the Interaction with polymerase core subunit RpoC motif. Residues 211-287 (ETINKLIRVQ…DDVIESPVDY (77 aa)) form a sigma-70 factor domain-3 region. A sigma-70 factor domain-4 region spans residues 300–353 (VMDTLTDREENVLRMRFGLDDGRMHTLEDVGKQFKVTRERIRQIEAKAIKKLRH). A DNA-binding region (H-T-H motif) is located at residues 326–345 (LEDVGKQFKVTRERIRQIEA).

This sequence belongs to the sigma-70 factor family. RpoD/SigA subfamily. In terms of assembly, interacts transiently with the RNA polymerase catalytic core.

The protein localises to the cytoplasm. Its function is as follows. Sigma factors are initiation factors that promote the attachment of RNA polymerase to specific initiation sites and are then released. This sigma factor is the primary sigma factor during exponential growth. The polypeptide is RNA polymerase sigma factor SigA (Lactococcus lactis subsp. cremoris (Streptococcus cremoris)).